A 612-amino-acid polypeptide reads, in one-letter code: Sulfite reductase [NADPH] hemoprotein beta-component (612 aa).

Residues 1 to 26 (MDDHKPIETPDGPAVDTPGIGARRYE) are disordered. Residues Cys469, Cys475, Cys514, and Cys518 each contribute to the [4Fe-4S] cluster site. Cys518 provides a ligand contact to siroheme.

The protein belongs to the nitrite and sulfite reductase 4Fe-4S domain family. As to quaternary structure, alpha(8)-beta(8). The alpha component is a flavoprotein, the beta component is a hemoprotein. It depends on siroheme as a cofactor. Requires [4Fe-4S] cluster as cofactor.

The enzyme catalyses hydrogen sulfide + 3 NADP(+) + 3 H2O = sulfite + 3 NADPH + 4 H(+). It participates in sulfur metabolism; hydrogen sulfide biosynthesis; hydrogen sulfide from sulfite (NADPH route): step 1/1. Its function is as follows. Component of the sulfite reductase complex that catalyzes the 6-electron reduction of sulfite to sulfide. This is one of several activities required for the biosynthesis of L-cysteine from sulfate. The polypeptide is Sulfite reductase [NADPH] hemoprotein beta-component (Methylorubrum extorquens (strain CM4 / NCIMB 13688) (Methylobacterium extorquens)).